Here is a 570-residue protein sequence, read N- to C-terminus: Frizzled-2 (570 aa).

An N-terminal signal peptide occupies residues 1–28 (MRARSALPRSALPRLLLPLLLLPAAGPA). Residues 29–252 (QFHGEKGISI…HHHTRFARLW (224 aa)) lie on the Extracellular side of the membrane. The FZ domain occupies 39 to 158 (PDHGFCQPIS…HGAEQICVGQ (120 aa)). Disulfide bonds link Cys44-Cys105, Cys52-Cys98, Cys89-Cys126, Cys115-Cys155, and Cys119-Cys143. A glycan (N-linked (GlcNAc...) asparagine) is linked at Asn58. The N-linked (GlcNAc...) asparagine glycan is linked to Asn159. Residues 166–194 (PALLTTAPPSGLQPGAGGTPGGPGGGGAP) form a disordered region. Residues 179 to 193 (PGAGGTPGGPGGGGA) are compositionally biased toward gly residues. The chain crosses the membrane as a helical span at residues 253–273 (ILTWSVLCCASTFFTVTTSLV). The Cytoplasmic portion of the chain corresponds to 274–284 (AMQRFRYPERP). Residues 285-305 (IIFLSGCYTMVSVAYIAGFVL) traverse the membrane as a helical segment. Topologically, residues 306–332 (QERVVCNERFSEDGYRTVGQGTKKEGC) are extracellular. Residues 333-353 (TILFMMLYFFSMASSIWWVIL) form a helical membrane-spanning segment. The Cytoplasmic portion of the chain corresponds to 354–375 (SLTWFLAAGMKWGHAAIEANSQ). A helical transmembrane segment spans residues 376–396 (YFHLAAWAVPAVKTITILAMG). At 397-419 (QIDGDLLSGVCFVGLNRLDPLRG) the chain is on the extracellular side. The helical transmembrane segment at 420-440 (FVLAPLFVYLFIGTSFLLAGF) threads the bilayer. The Cytoplasmic segment spans residues 441–466 (VSLFRIRTIMKHDGTKTEPLERLMVR). A helical membrane pass occupies residues 467 to 487 (IGVFSVLYTVPATIVIACYFY). Over 488–524 (EQAFREHWERSWVSQHCKSLAIPCPAHYTPRTSPDFT) the chain is Extracellular. Residues 525–545 (VYMIKYLMTLIVGITSGFWIW) form a helical membrane-spanning segment. Residues 546-570 (SGKTLHSWRKFYTRLTNSRHGETTV) are Cytoplasmic-facing. A Lys-Thr-X-X-X-Trp motif, mediates interaction with the PDZ domain of Dvl family members motif is present at residues 548–553 (KTLHSW). Residues 568 to 570 (TTV) carry the PDZ-binding motif.

Belongs to the G-protein coupled receptor Fz/Smo family. Ubiquitinated by ZNRF3, leading to its degradation by the proteasome. Widely expressed. Most abundant in kidney, liver, uterus, ovary and heart. Lower levels seen in brain and intestine. Extremely low in calvaria, mammary glands and testis.

Its subcellular location is the membrane. It is found in the cell membrane. In terms of biological role, receptor for Wnt proteins. Most of frizzled receptors are coupled to the beta-catenin canonical signaling pathway, which leads to the activation of disheveled proteins, inhibition of GSK-3 kinase, nuclear accumulation of beta-catenin and activation of Wnt target genes. A second signaling pathway involving PKC and calcium fluxes has been seen for some family members, but it is not yet clear if it represents a distinct pathway or if it can be integrated in the canonical pathway, as PKC seems to be required for Wnt-mediated inactivation of GSK-3 kinase. Both pathways seem to involve interactions with G-proteins. May be involved in transduction and intercellular transmission of polarity information during tissue morphogenesis and/or in differentiated tissues. Activation by Wnt5A stimulates PKC activity via a G-protein-dependent mechanism. The protein is Frizzled-2 (Fzd2) of Rattus norvegicus (Rat).